The chain runs to 795 residues: Lon protease (795 aa).

The Lon N-terminal domain occupies 7–213 (PQILVVRNQV…KIIGSGIEDL (207 aa)). An ATP-binding site is contributed by 379 to 386 (GPPGVGKS). The Lon proteolytic domain maps to 615–795 (DALPGIVNGM…YKDIYNKIFN (181 aa)). Residues S702 and K745 contribute to the active site.

Belongs to the peptidase S16 family. As to quaternary structure, homohexamer. Organized in a ring with a central cavity.

Its subcellular location is the cytoplasm. The catalysed reaction is Hydrolysis of proteins in presence of ATP.. ATP-dependent serine protease that mediates the selective degradation of mutant and abnormal proteins as well as certain short-lived regulatory proteins. Required for cellular homeostasis and for survival from DNA damage and developmental changes induced by stress. Degrades polypeptides processively to yield small peptide fragments that are 5 to 10 amino acids long. Binds to DNA in a double-stranded, site-specific manner. In Mycoplasma pneumoniae (strain ATCC 29342 / M129 / Subtype 1) (Mycoplasmoides pneumoniae), this protein is Lon protease.